We begin with the raw amino-acid sequence, 552 residues long: MKQNDTKKTTQRRNSKKYSSKTNRGTKRAPRDQEVGTGAQESTRNDVAWYARYPHILEEATRLPFAYPIGQYYDTGYSVASATEWSKYVDTSLTIPGVMCVNFTPTPGESYNKNSPINIAAQNVYTYVRHMNSGHANYEQADLMMYLLAMDSLYIFHSYVRKILAISKLYTPVNKYFPRALLVALGVDPEDVFANQAQWEYFVNMVAYRAGAFAAPASMTYYERHAWMSNGLYVDQDVTRAQIYMFKPTMLWKYENLGTTGTKLVPLMMPKAGDNRKLVDFQVLFNNLVSTMLGDEDFGIMSGDVFKAFGADGLVKLLAVDSTTMTLPTYDPLILAQIHSARAVGAPILETSTLTGFPGRQWQITQNPDVNNGAIIFHPSFGYDGQDHEELSFRAMCSNMILNLPGEAHSAEMIIEATRLATMFQVKAVPAGDTSKPVLYLPNGFGTEVVNDYTMISVDKATPHDLTIHTFFNNILVPNAKENYVANLELLNNIIQFDWAPQLYLTYGIAQESFGPFAQLNDWTILTGETLARMHEVCVTSMFDVPQMGFNK.

The tract at residues 1 to 41 (MKQNDTKKTTQRRNSKKYSSKTNRGTKRAPRDQEVGTGAQE) is disordered. Over residues 9–28 (TTQRRNSKKYSSKTNRGTKR) the composition is skewed to basic residues.

Homodimer. Post-translationally, the 7 kDa polypeptide is acetylated. Autocatalytic proteolysis releases a post-translationally modified peptide that remains associated with nucleic acid within the virion. This peptide is observed only when nucleic acid is packaged in the capsid.

It is found in the virion. Its function is as follows. The capsid protein self-assembles to form an icosahedral capsid with a T=2 symmetry made of 120 subunits. In Human picobirnavirus (strain Human/Thailand/Hy005102/-) (PBV), this protein is Capsid protein precursor (Segment-1).